A 160-amino-acid polypeptide reads, in one-letter code: Small ribosomal subunit protein bS6 (160 aa).

Basic and acidic residues-rich tracts occupy residues 94–119 (EEHE…RGGR) and 125–152 (RGDR…REDA). A disordered region spans residues 94–160 (EEHEEGPSAM…DADTAAASEE (67 aa)).

This sequence belongs to the bacterial ribosomal protein bS6 family.

Its function is as follows. Binds together with bS18 to 16S ribosomal RNA. The protein is Small ribosomal subunit protein bS6 of Rhodopseudomonas palustris (strain BisB5).